The sequence spans 509 residues: tRNA (guanine(37)-N(1))-methyltransferase (509 aa).

S-adenosyl-L-methionine is bound by residues His-289, 327 to 328 (DL), 355 to 356 (DG), and Asn-387. The tract at residues 478 to 509 (TRNPENHEDPPLKRQRTAEAFSDEKTQIVSNT) is disordered.

Belongs to the class I-like SAM-binding methyltransferase superfamily. TRM5/TYW2 family. Monomer.

Its subcellular location is the mitochondrion matrix. It localises to the nucleus. It is found in the cytoplasm. The catalysed reaction is guanosine(37) in tRNA + S-adenosyl-L-methionine = N(1)-methylguanosine(37) in tRNA + S-adenosyl-L-homocysteine + H(+). In terms of biological role, involved in mitochondrial tRNA methylation. Specifically methylates the N1 position of guanosine-37 in various tRNAs. Methylation is not dependent on the nature of the nucleoside 5' of the target nucleoside. This is the first step in the biosynthesis of wybutosine (yW), a modified base adjacent to the anticodon of tRNAs and required for accurate decoding. The polypeptide is tRNA (guanine(37)-N(1))-methyltransferase (Homo sapiens (Human)).